The primary structure comprises 137 residues: Small ribosomal subunit protein uS12 (137 aa).

Residues 1 to 57 form a disordered region; it reads MPTINQLVRKPRKSKVEKSKSPALNVGYNSLKRVPTNESAPQKRGVATRVGTMTPKK. D102 carries the post-translational modification 3-methylthioaspartic acid.

This sequence belongs to the universal ribosomal protein uS12 family. Part of the 30S ribosomal subunit. Contacts proteins S8 and S17. May interact with IF1 in the 30S initiation complex.

Functionally, with S4 and S5 plays an important role in translational accuracy. Its function is as follows. Interacts with and stabilizes bases of the 16S rRNA that are involved in tRNA selection in the A site and with the mRNA backbone. Located at the interface of the 30S and 50S subunits, it traverses the body of the 30S subunit contacting proteins on the other side and probably holding the rRNA structure together. The combined cluster of proteins S8, S12 and S17 appears to hold together the shoulder and platform of the 30S subunit. This chain is Small ribosomal subunit protein uS12, found in Streptococcus gordonii (strain Challis / ATCC 35105 / BCRC 15272 / CH1 / DL1 / V288).